The chain runs to 439 residues: GTPase Der (439 aa).

EngA-type G domains lie at 4 to 168 and 177 to 352; these read PIVA…KDDE and INIA…DNYN. GTP contacts are provided by residues 10–17, 57–61, 120–123, 183–190, 230–234, and 295–298; these read GRPNVGKS, DTGGI, NKID, GKPNVGKS, DTAGL, and NKWD. A KH-like domain is found at 353–437; that stretch reads KRVKTGVLND…GIKSEFRERK (85 aa).

This sequence belongs to the TRAFAC class TrmE-Era-EngA-EngB-Septin-like GTPase superfamily. EngA (Der) GTPase family. Associates with the 50S ribosomal subunit.

In terms of biological role, GTPase that plays an essential role in the late steps of ribosome biogenesis. The polypeptide is GTPase Der (Clostridium botulinum (strain ATCC 19397 / Type A)).